We begin with the raw amino-acid sequence, 307 residues long: Mitochondrial glycine transporter YMC1 (307 aa).

Solcar repeat units lie at residues 26-106 (VKDL…MKRF), 121-204 (PQYY…LIAN), and 218-305 (PAWK…AMRL). Transmembrane regions (helical) follow at residues 29-49 (LLAGTAGGIAQVLVGQPFDTT), 83-103 (LTPLIGVGACVSLQFGVNEAM), 118-138 (LSLPQYYACGVTGGIVNSFLA), 183-203 (TILREGHGCGTYFLVYEALIA), 223-243 (CIFGALSGTALWLMVYPLDVI), and 277-298 (FFKGFGPTMLRAAPANGATFAT).

It belongs to the mitochondrial carrier (TC 2.A.29) family.

It is found in the mitochondrion inner membrane. In terms of biological role, secondary mitochondrial glycine transporter required for the biosynthesis of heme at high glycine concentrations. Imports the precursor glycine into the mitochondrial matrix, where it is condensed with succinyl-CoA to produce 5-aminolevulinate (ALA), the first step of heme biosynthesis. The chain is Mitochondrial glycine transporter YMC1 from Saccharomyces cerevisiae (strain ATCC 204508 / S288c) (Baker's yeast).